The following is a 251-amino-acid chain: Phosphate import ATP-binding protein PstB (251 aa).

Residues 5 to 246 form the ABC transporter domain; it reads MNSKDVNFWY…PENKKTEDYI (242 aa). 37-44 provides a ligand contact to ATP; sequence GPSGCGKS.

The protein belongs to the ABC transporter superfamily. Phosphate importer (TC 3.A.1.7) family. As to quaternary structure, the complex is composed of two ATP-binding proteins (PstB), two transmembrane proteins (PstC and PstA) and a solute-binding protein (PstS).

It localises to the cell membrane. It carries out the reaction phosphate(out) + ATP + H2O = ADP + 2 phosphate(in) + H(+). Functionally, part of the ABC transporter complex PstSACB involved in phosphate import. Responsible for energy coupling to the transport system. The sequence is that of Phosphate import ATP-binding protein PstB from Methanococcus maripaludis (strain DSM 14266 / JCM 13030 / NBRC 101832 / S2 / LL).